We begin with the raw amino-acid sequence, 324 residues long: HTH-type transcriptional regulator GlxA (324 aa).

In terms of domain architecture, HTH araC/xylS-type spans 223–321 (LAVLEKMETA…SQTPGSLRRR (99 aa)). 2 DNA-binding regions (H-T-H motif) span residues 240–261 (TAMARLAGVSPRHLDRLFREHR) and 288–311 (IPEIAYATGFSSPAHFSNAFKRLF).

The protein is HTH-type transcriptional regulator GlxA (glxA) of Rhizobium meliloti (strain 1021) (Ensifer meliloti).